The chain runs to 159 residues: 2-C-methyl-D-erythritol 2,4-cyclodiphosphate synthase (159 aa).

Residues Asp-10 and His-12 each contribute to the a divalent metal cation site. Residues 10–12 and 36–37 each bind 4-CDP-2-C-methyl-D-erythritol 2-phosphate; these read DVH and HS. A divalent metal cation is bound at residue His-44. 4-CDP-2-C-methyl-D-erythritol 2-phosphate is bound by residues 58–60, 134–137, Phe-141, and Arg-144; these read DIG and TTTE.

It belongs to the IspF family. As to quaternary structure, homotrimer. A divalent metal cation serves as cofactor.

The enzyme catalyses 4-CDP-2-C-methyl-D-erythritol 2-phosphate = 2-C-methyl-D-erythritol 2,4-cyclic diphosphate + CMP. It functions in the pathway isoprenoid biosynthesis; isopentenyl diphosphate biosynthesis via DXP pathway; isopentenyl diphosphate from 1-deoxy-D-xylulose 5-phosphate: step 4/6. Involved in the biosynthesis of isopentenyl diphosphate (IPP) and dimethylallyl diphosphate (DMAPP), two major building blocks of isoprenoid compounds. Catalyzes the conversion of 4-diphosphocytidyl-2-C-methyl-D-erythritol 2-phosphate (CDP-ME2P) to 2-C-methyl-D-erythritol 2,4-cyclodiphosphate (ME-CPP) with a corresponding release of cytidine 5-monophosphate (CMP). This is 2-C-methyl-D-erythritol 2,4-cyclodiphosphate synthase from Bacteroides fragilis (strain ATCC 25285 / DSM 2151 / CCUG 4856 / JCM 11019 / LMG 10263 / NCTC 9343 / Onslow / VPI 2553 / EN-2).